The sequence spans 357 residues: Probable butyrate kinase 1 (357 aa).

Belongs to the acetokinase family.

The protein resides in the cytoplasm. The catalysed reaction is butanoate + ATP = butanoyl phosphate + ADP. This chain is Probable butyrate kinase 1, found in Caldanaerobacter subterraneus subsp. tengcongensis (strain DSM 15242 / JCM 11007 / NBRC 100824 / MB4) (Thermoanaerobacter tengcongensis).